We begin with the raw amino-acid sequence, 340 residues long: 4-amino-5-hydroxymethyl-2-methylpyrimidine phosphate synthase THI5 (340 aa).

Lys62 bears the N6-(pyridoxal phosphate)lysine mark. His66 is an active-site residue. A pyridoxal 5'-phosphate-binding site is contributed by 115–118 (GEFG). The short motif at 195 to 199 (CCCFC) is the CCCFC; essential for catalytic activity, may be the site of iron coordination element.

Belongs to the NMT1/THI5 family. Homodimer. Fe cation is required as a cofactor.

The enzyme catalyses N(6)-(pyridoxal phosphate)-L-lysyl-[4-amino-5-hydroxymethyl-2-methylpyrimidine phosphate synthase] + L-histidyl-[4-amino-5-hydroxymethyl-2-methylpyrimidine phosphate synthase] + 2 Fe(3+) + 4 H2O = L-lysyl-[4-amino-5-hydroxymethyl-2-methylpyrimidine phosphate synthase] + (2S)-2-amino-5-hydroxy-4-oxopentanoyl-[4-amino-5-hydroxymethyl-2-methylpyrimidine phosphate synthase] + 4-amino-2-methyl-5-(phosphooxymethyl)pyrimidine + 3-oxopropanoate + 2 Fe(2+) + 2 H(+). The protein operates within cofactor biosynthesis; thiamine diphosphate biosynthesis. Functionally, responsible for the formation of the pyrimidine heterocycle in the thiamine biosynthesis pathway. Catalyzes the formation of hydroxymethylpyrimidine phosphate (HMP-P) from histidine and pyridoxal phosphate (PLP). The protein uses PLP and the active site histidine to form HMP-P, generating an inactive enzyme. The enzyme can only undergo a single turnover, which suggests it is a suicide enzyme. In Saccharomyces cerevisiae (strain ATCC 204508 / S288c) (Baker's yeast), this protein is 4-amino-5-hydroxymethyl-2-methylpyrimidine phosphate synthase THI5.